The following is a 101-amino-acid chain: Small ribosomal subunit protein bS18c (101 aa).

The protein belongs to the bacterial ribosomal protein bS18 family. In terms of assembly, part of the 30S ribosomal subunit.

The protein resides in the plastid. It is found in the chloroplast. This chain is Small ribosomal subunit protein bS18c, found in Gossypium hirsutum (Upland cotton).